The following is a 400-amino-acid chain: CCA-adding enzyme (400 aa).

ATP is bound by residues Gly28 and Arg31. The CTP site is built by Gly28 and Arg31. 2 residues coordinate Mg(2+): Asp41 and Asp43. ATP contacts are provided by Arg112, Asp155, Arg158, Arg161, and Arg164. Arg112, Asp155, Arg158, Arg161, and Arg164 together coordinate CTP.

Belongs to the tRNA nucleotidyltransferase/poly(A) polymerase family. Bacterial CCA-adding enzyme type 3 subfamily. In terms of assembly, homodimer. The cofactor is Mg(2+).

It catalyses the reaction a tRNA precursor + 2 CTP + ATP = a tRNA with a 3' CCA end + 3 diphosphate. The enzyme catalyses a tRNA with a 3' CCA end + 2 CTP + ATP = a tRNA with a 3' CCACCA end + 3 diphosphate. In terms of biological role, catalyzes the addition and repair of the essential 3'-terminal CCA sequence in tRNAs without using a nucleic acid template. Adds these three nucleotides in the order of C, C, and A to the tRNA nucleotide-73, using CTP and ATP as substrates and producing inorganic pyrophosphate. tRNA 3'-terminal CCA addition is required both for tRNA processing and repair. Also involved in tRNA surveillance by mediating tandem CCA addition to generate a CCACCA at the 3' terminus of unstable tRNAs. While stable tRNAs receive only 3'-terminal CCA, unstable tRNAs are marked with CCACCA and rapidly degraded. The protein is CCA-adding enzyme of Oceanobacillus iheyensis (strain DSM 14371 / CIP 107618 / JCM 11309 / KCTC 3954 / HTE831).